Here is a 5430-residue protein sequence, read N- to C-terminus: Microtubule-actin cross-linking factor 1 (5430 aa).

The disordered stretch occupies residues 1–47 (MSSSDEETLSERSCRSERSCRSERSYRSERSGSLSPCPPGDTLPWNL). Residues 1–295 (MSSSDEETLS…VITYVSSIYD (295 aa)) form an actin-binding region. Phosphoserine is present on S4. Positions 9–30 (LSERSCRSERSCRSERSYRSER) are enriched in basic and acidic residues. S35 and S57 each carry phosphoserine. Calponin-homology (CH) domains are found at residues 78–181 (RVQK…LHFQ) and 194–298 (MSAK…DAFP). LRR repeat units lie at residues 148 to 171 (QRQV…LTLG) and 240 to 264 (LVDM…VAER). S280 carries the post-translational modification Phosphoserine. 2 LRR repeats span residues 377–399 (LYKL…YHPN) and 441–464 (LNCE…LESG). The SH3 domain occupies 868-925 (KSTLSVKAICDYRQIEITICKNDECVLEDNSQRTKWKVISPTGNEAMVPSVCLLIPPP). The stretch at 1050-1073 (ISELKNIRLRLEECEQRLLKQIQS) is one LRR 5 repeat. A Phosphoserine modification is found at S1122. LRR repeat units follow at residues 1128-1154 (ATTL…VCLN), 1187-1210 (PADL…VKDK), and 1257-1282 (HRVI…DYRA). A phosphoserine mark is found at S1367 and S1376. LRR repeat units follow at residues 1579–1602 (QQEL…IQNH) and 1629–1653 (LTAL…TREA). Spectrin repeat units lie at residues 1816–1891 (ELQK…NFEE) and 1933–2041 (QYQQ…ALLQ). Phosphoserine is present on S1860. The LRR 11 repeat unit spans residues 1869–1891 (KGDLRFVTISGQKVLETENNFEE). LRR repeat units follow at residues 2058–2083 (LQSM…LIQE) and 2194–2220 (IQEL…ALGS). One copy of the Spectrin 3 repeat lies at 2399 to 2507 (RMEEVQKEAS…TVARQKQLEE (109 aa)). Residues S2429 and S2454 each carry the phosphoserine modification. LRR repeat units follow at residues 2444 to 2467 (KAFL…LAGL), 2534 to 2557 (GVLG…QFML), and 2702 to 2725 (KKRL…RMNR). Spectrin repeat units follow at residues 2733–2837 (TQQF…SRLK) and 2842–2945 (KAQK…SLEE). Phosphoserine occurs at positions 2769 and 2895. 3 LRR repeats span residues 2984 to 3009 (NKNL…YLRD), 3105 to 3127 (NKIQ…MLEE), and 3214 to 3237 (KEQV…LIQS). 13 Spectrin repeats span residues 3169–3274 (EDFY…QLQE), 3281–3383 (KFQD…QLED), 3388–3491 (AKQF…SLLE), 3714–3818 (RSQQ…ARLE), 3825–3927 (NQFW…ALDE), 4047–4152 (LAEK…KLED), 4157–4261 (AVQY…HKLE), 4267–4370 (LGQF…QQLQ), 4375–4481 (QAQG…KLEE), 4486–4589 (ATEF…RSLD), 4594–4700 (RAKQ…KLEE), 4707–4808 (QFMD…RLEQ), and 4812–4916 (QAEE…QRLE). Phosphothreonine is present on T3368. 2 LRR repeats span residues 3737-3761 (MALG…AFSI) and 3846-3870 (AQLP…QLRE). Phosphoserine is present on S4074. K4252 is modified (N6-acetyllysine). The LRR 22 repeat unit spans residues 4538–4561 (RDQIIELDQTGNQLKFLSQKQDVV). Residues 4993-5023 (PTHAPFIEKSRSGSRKSLNQPTPPPMPILSQ) are disordered. S5009 carries the phosphoserine modification. 2 EF-hand domains span residues 5083–5118 (HKKS…SKFP) and 5119–5154 (TTKL…NKDA). Residues D5096, D5098, D5100, K5102, E5107, D5132, D5134, D5136, Y5138, and E5143 each contribute to the Ca(2+) site. The 73-residue stretch at 5159 to 5231 (TDADKIEDEV…EFLVKNDPCR (73 aa)) folds into the GAR domain. The segment at 5159–5430 (TDADKIEDEV…ASPRTPCPKR (272 aa)) is C-terminal tail. Residues 5247 to 5430 (PEGASQGMTP…ASPRTPCPKR (184 aa)) form a disordered region. The segment covering 5267–5301 (SSRAASPTRSSSSASQSNHSCTSMPSSPATPASGT) has biased composition (low complexity). T5296 is subject to Phosphothreonine. Polar residues predominate over residues 5317 to 5341 (TFHSSRTSLAGDTSNSSSPASTGAK). 2 positions are modified to phosphoserine: S5321 and S5334. Over residues 5352–5366 (SRPGSRAGSRAGSRA) the composition is skewed to low complexity. The 4 X 4 AA tandem repeats of [GS]-S-R-[AR] stretch occupies residues 5355–5370 (GSRAGSRAGSRASSRR). S5372 and S5375 each carry phosphoserine. The span at 5381–5391 (ETQSACSDTSE) shows a compositional bias: polar residues. Low complexity predominate over residues 5392 to 5403 (SSAAGGQGSSRR).

The protein belongs to the plakin or cytolinker family. As to quaternary structure, interacts with MAPRE1, CLASP1, CLASP2 and GOLGA4. Interacts with AXIN1 and LRP6. Found in a complex composed of MACF1, APC; AXIN1, CTNNB1 and GSK3B. Interacts with CAMSAP3. Phosphorylated on serine residues in the C-terminal tail by GSK3B. Phosphorylation inhibits microtubule-binding and this plays a critical role in bulge stem cell migration and skin wound repair. Wnt-signaling can repress phosphorylation.

It is found in the cytoplasm. The protein resides in the cytoskeleton. It localises to the golgi apparatus. Its subcellular location is the cell membrane. The protein localises to the cell projection. It is found in the ruffle membrane. The protein resides in the membrane. Its function is as follows. F-actin-binding protein which plays a role in cross-linking actin to other cytoskeletal proteins and also binds to microtubules. Plays an important role in ERBB2-dependent stabilization of microtubules at the cell cortex. Acts as a positive regulator of Wnt receptor signaling pathway and is involved in the translocation of AXIN1 and its associated complex (composed of APC, CTNNB1 and GSK3B) from the cytoplasm to the cell membrane. Has actin-regulated ATPase activity and is essential for controlling focal adhesions (FAs) assembly and dynamics. Interaction with CAMSAP3 at the minus ends of non-centrosomal microtubules tethers microtubules minus-ends to actin filaments, regulating focal adhesion size and cell migration. May play role in delivery of transport vesicles containing GPI-linked proteins from the trans-Golgi network through its interaction with GOLGA4. Plays a key role in wound healing and epidermal cell migration. Required for efficient upward migration of bulge cells in response to wounding and this function is primarily rooted in its ability to coordinate microtubule dynamics and polarize hair follicle stem cells. As a regulator of actin and microtubule arrangement and stabilization, it plays an essential role in neurite outgrowth, branching and spine formation during brain development. This Rattus norvegicus (Rat) protein is Microtubule-actin cross-linking factor 1.